A 285-amino-acid polypeptide reads, in one-letter code: Heme oxygenase 3, chloroplastic (285 aa).

A chloroplast-targeting transit peptide spans 1-58 (MATTRLNPSCHFPASTRLSCESYLGLRTTGRISYARTLTAPRGYLAVKANGGQASVVT). Residue His89 coordinates heme b. Over residues 89–105 (HTKDQAREGEKESRSPE) the composition is skewed to basic and acidic residues. Residues 89–109 (HTKDQAREGEKESRSPEEGPV) are disordered.

This sequence belongs to the heme oxygenase family. Widely expressed at low levels.

Its subcellular location is the plastid. The protein resides in the chloroplast. The catalysed reaction is heme b + 3 reduced [NADPH--hemoprotein reductase] + 3 O2 = biliverdin IXalpha + CO + Fe(2+) + 3 oxidized [NADPH--hemoprotein reductase] + 3 H2O + H(+). In terms of biological role, catalyzes the opening of the heme ring to form the open-chain tetrapyrrole biliverdin IX with the release of iron and carbon monoxide (CO). Produces specifically the biliverdin IX-alpha isomer. Plays a minor role in phytochrome assembly and photomorphogenesis. The sequence is that of Heme oxygenase 3, chloroplastic (HO3) from Arabidopsis thaliana (Mouse-ear cress).